Reading from the N-terminus, the 247-residue chain is MSKQPDRLFAQPLEQVPDFVFNEDVVRVFPDMIKRSVPGYPTIVENLGVLAARFAQPNTALYDLGASLGAVTQSLRRHVRSEGCRVIAVDNSAAMVERCRQYLTAQDSMFQELLPVQVLDADILALPFEPASVVAMNFTLQFIAPEQRLALLSRIRQALLPGGALILSEKLHFADDQEQNLLNELHLDFKRANGYSELEIAQKRSAIENVMKPDTLHTHTERLRAAGFSKVVPWFQCLNFASLIALP.

Residues Y40, 65 to 67, 90 to 91, 122 to 123, N137, and R204 each bind S-adenosyl-L-methionine; these read GAS, DN, and DI.

The protein belongs to the class I-like SAM-binding methyltransferase superfamily. Cx-SAM synthase family. Homodimer.

The catalysed reaction is prephenate + S-adenosyl-L-methionine = carboxy-S-adenosyl-L-methionine + 3-phenylpyruvate + H2O. Its function is as follows. Catalyzes the conversion of S-adenosyl-L-methionine (SAM) to carboxy-S-adenosyl-L-methionine (Cx-SAM). This Pseudomonas putida (strain W619) protein is Carboxy-S-adenosyl-L-methionine synthase.